Consider the following 301-residue polypeptide: 2-dehydropantoate 2-reductase (301 aa).

NADP(+)-binding positions include 11-16 (GAGAMG), N107, and A133. N107 lines the substrate pocket. Residue K187 is the Proton donor of the active site. The substrate site is built by N191, N195, N205, and S251. Residue E263 coordinates NADP(+).

It belongs to the ketopantoate reductase family.

It is found in the cytoplasm. The catalysed reaction is (R)-pantoate + NADP(+) = 2-dehydropantoate + NADPH + H(+). The protein operates within cofactor biosynthesis; (R)-pantothenate biosynthesis; (R)-pantoate from 3-methyl-2-oxobutanoate: step 2/2. Catalyzes the NADPH-dependent reduction of ketopantoate into pantoic acid. The protein is 2-dehydropantoate 2-reductase of Listeria innocua serovar 6a (strain ATCC BAA-680 / CLIP 11262).